Here is a 420-residue protein sequence, read N- to C-terminus: Heterogeneous nuclear ribonucleoprotein D-like (420 aa).

2 disordered regions span residues 1-83 (MEVP…RRRP) and 96-120 (QRSA…SVTM). At arginine 25 the chain carries Omega-N-methylarginine. Over residues 36–52 (RQLAPLLPSLAPSSARQ) the composition is skewed to low complexity. 2 consecutive RRM domains span residues 148–230 (GKMF…KGKE) and 233–312 (KKVF…QPKE). Lysine 161 is modified (N6-methyllysine). Lysine 209 participates in a covalent cross-link: Glycyl lysine isopeptide (Lys-Gly) (interchain with G-Cter in SUMO2). Lysine 216 carries the post-translational modification N6-acetyllysine. Residue serine 241 is modified to Phosphoserine. Disordered regions lie at residues 313–348 (VYRQ…NWNQ) and 398–420 (GQQS…YQPY). The span at 323 to 342 (GGRGAAAGGRGGTRGRGRGQ) shows a compositional bias: gly residues. The interval 342–420 (QGQNWNQGFN…GNHQNNYQPY (79 aa)) is necessary for interaction with TNPO1. Residues 396-420 (YSGQQSTYGKASRGGGNHQNNYQPY) are necessary for its nuclear import and export. Residue arginine 408 is modified to Dimethylated arginine; alternate. Arginine 408 is modified (omega-N-methylarginine; alternate).

Interacts with ZNF148. Interacts with TNPO1. Post-translationally, dimethylation of Arg-408 is probably of the asymmetric type. Expressed in heart, brain, placenta, lung, liver, skeletal muscle, kidney, pancreas, spleen, thymus, prostate, testis, ovary, small intestine, colon and leukocytes. Expressed in myeloid leukemia, gastric adenocarcinoma, cervical carcinoma, hepatoma, fibrosarcoma, colon adenocarcinoma, epidermoid carcinoma, osteosarcoma and urinary bladder carcinoma cells.

It localises to the nucleus. The protein localises to the cytoplasm. Acts as a transcriptional regulator. Promotes transcription repression. Promotes transcription activation in differentiated myotubes. Binds to double- and single-stranded DNA sequences. Binds to the transcription suppressor CATR sequence of the COX5B promoter. Binds with high affinity to RNA molecules that contain AU-rich elements (AREs) found within the 3'-UTR of many proto-oncogenes and cytokine mRNAs. Binds both to nuclear and cytoplasmic poly(A) mRNAs. Binds to poly(G) and poly(A), but not to poly(U) or poly(C) RNA homopolymers. Binds to the 5'-ACUAGC-3' RNA consensus sequence. This chain is Heterogeneous nuclear ribonucleoprotein D-like (HNRNPDL), found in Homo sapiens (Human).